The primary structure comprises 559 residues: Potassium-transporting ATPase potassium-binding subunit (559 aa).

13 helical membrane passes run 5 to 25 (GFLL…PLGS), 27 to 47 (LARL…RILW), 63 to 83 (LLAL…LLFW), 132 to 152 (GLTV…FALI), 170 to 190 (LVRI…LFFI), 253 to 273 (LAQM…FGEA), 283 to 303 (LLWA…WAEV), 327 to 347 (FGVL…CGAV), 356 to 376 (ALGG…FGGV), 379 to 399 (GLYG…LMIG), 416 to 436 (MTAL…ALAM), 484 to 504 (LLAF…MAIA), and 524 to 544 (GALF…LTFI).

This sequence belongs to the KdpA family. In terms of assembly, the system is composed of three essential subunits: KdpA, KdpB and KdpC.

The protein localises to the cell inner membrane. In terms of biological role, part of the high-affinity ATP-driven potassium transport (or Kdp) system, which catalyzes the hydrolysis of ATP coupled with the electrogenic transport of potassium into the cytoplasm. This subunit binds the periplasmic potassium ions and delivers the ions to the membrane domain of KdpB through an intramembrane tunnel. This chain is Potassium-transporting ATPase potassium-binding subunit, found in Salmonella heidelberg (strain SL476).